The chain runs to 399 residues: Argininosuccinate synthase (399 aa).

ATP-binding positions include 8–16 (AYSGGLDTS) and Ala-35. Residue Tyr-87 coordinates L-citrulline. Gly-117 provides a ligand contact to ATP. L-aspartate contacts are provided by Thr-119, Asn-123, and Asp-124. Asn-123 lines the L-citrulline pocket. Arg-127, Ser-176, Ser-185, Glu-261, and Tyr-273 together coordinate L-citrulline.

It belongs to the argininosuccinate synthase family. Type 1 subfamily. In terms of assembly, homotetramer.

Its subcellular location is the cytoplasm. It carries out the reaction L-citrulline + L-aspartate + ATP = 2-(N(omega)-L-arginino)succinate + AMP + diphosphate + H(+). Its pathway is amino-acid biosynthesis; L-arginine biosynthesis; L-arginine from L-ornithine and carbamoyl phosphate: step 2/3. The polypeptide is Argininosuccinate synthase (Buchnera aphidicola subsp. Cinara cedri (strain Cc)).